Here is a 350-residue protein sequence, read N- to C-terminus: Outer membrane protein A (350 aa).

The N-terminal stretch at 1-21 is a signal peptide; sequence MKKTAIAIAVALAGFATVAQA. The next 8 membrane-spanning stretches (beta stranded) occupy residues 27–37, 55–66, 70–78, 96–107, 112–120, 146–155, 160–167, and 186–194; these read TWYAGAKLGWS, QLGAGAFGGYQV, VGFEMGYDW, QGVQLTAKLGYP, LDVYTRLGG, PVFAGGIEYA, IATRLEYQ, and LLSVGVSYR. 4 consecutive repeat copies span residues 205-206, 207-208, 209-210, and 211-212. Residues 205–212 form a 4 X 2 AA tandem repeats of A-P region; it reads APAPAPAP. An OmpA-like domain is found at 214 to 342; it reads VQTKHFTLKS…RVEIEVKGVK (129 aa). A disulfide bond links C315 and C327.

This sequence belongs to the outer membrane OOP (TC 1.B.6) superfamily. OmpA family. In terms of assembly, monomer and homodimer.

The protein localises to the cell outer membrane. In terms of biological role, with TolR probably plays a role in maintaining the position of the peptidoglycan cell wall in the periplasm. Acts as a porin with low permeability that allows slow penetration of small solutes; an internal gate slows down solute passage. Functionally, required for conjugation with F-type plasmids; probably serves as the mating receptor on recipient cells. The polypeptide is Outer membrane protein A (Salmonella typhi).